Here is a 1216-residue protein sequence, read N- to C-terminus: Tyrosine-protein kinase receptor ver-4 (1216 aa).

Residues 1–789 (MRVSLTEFLV…VKVAGASSSS (789 aa)) are Extracellular-facing. Residues Asn-142, Asn-195, Asn-206, Asn-245, Asn-283, Asn-333, Asn-348, Asn-384, Asn-402, Asn-412, Asn-496, Asn-508, Asn-588, Asn-599, Asn-664, and Asn-703 are each glycosylated (N-linked (GlcNAc...) asparagine). 2 consecutive Ig-like C2-type domains span residues 596–691 (KSVN…TSIS) and 697–783 (PPFL…VKVA). The cysteines at positions 619 and 675 are disulfide-linked. Cys-721 and Cys-765 are joined by a disulfide. Residues 790–810 (FFWLFITFFAFVVVGIVVSLL) form a helical membrane-spanning segment. Residues 811–1216 (WKLFGQKDLK…WVQKPTQLFF (406 aa)) lie on the Cytoplasmic side of the membrane. Positions 870-1181 (LEILETLGSG…IKLFKNHIQY (312 aa)) constitute a Protein kinase domain. ATP contacts are provided by residues 876-884 (LGSGQFGIV) and Lys-908. The active-site Proton acceptor is the Asp-1042.

The protein belongs to the protein kinase superfamily. Tyr protein kinase family.

It is found in the cell membrane. It catalyses the reaction L-tyrosyl-[protein] + ATP = O-phospho-L-tyrosyl-[protein] + ADP + H(+). In terms of biological role, receptor tyrosine kinase which may be involved, downstream of pvf-1, in the positioning of ray 1, the most anterior ray sensillum in the male tail. The chain is Tyrosine-protein kinase receptor ver-4 from Caenorhabditis elegans.